A 66-amino-acid polypeptide reads, in one-letter code: Hemicalcin (66 aa).

Positions 1-21 (MRASLFIVIFVVSFITISCLS) are cleaved as a signal peptide. Residues 22 to 33 (TDDEEARWIEKR) constitute a propeptide that is removed on maturation. 3 disulfide bridges follow: Cys-36–Cys-50, Cys-43–Cys-54, and Cys-49–Cys-65. Residues 55–57 (KRR) form an essential for stimulation of [3H]ryanodine binding to RYR1 region.

It belongs to the scorpion calcin family. As to expression, expressed by the venom gland.

It localises to the secreted. Its function is as follows. This toxin stabilizes ryanodine receptor 1 (RyR1) opening in a long-lasting subconductance state (20% and 38% of the full conductance state have been found). It promotes an increase in the opening probability at intermediate concentration. Furthermore, it triggers calcium release from sarcoplasmic vesicles (68 nM are enough to induce a sharp release, and 45% of the total calcium is released after toxin (100 nM) addition) probably by acting as a cell-penetrating peptide (CPP). In addition, it has been shown to dose-dependently stimulate ryanodine binding to RyR1 (EC(50)=6.9-71 nM). It also augments the bell-shaped calcium-[3H]ryanodine binding curve that is maximal at about 10 uM calcium concentration. It binds a different site as ryanodine. It acts synergistically with caffeine. In vivo, intracerebroventricular injection into mice induces neurotoxic symptoms, followed by death. This chain is Hemicalcin, found in Hemiscorpius lepturus (Scorpion).